The sequence spans 412 residues: Arginine biosynthesis bifunctional protein ArgJ (412 aa).

6 residues coordinate substrate: Thr158, Lys184, Thr195, Glu284, Asn407, and Ser412. Thr195 acts as the Nucleophile in catalysis.

Belongs to the ArgJ family. As to quaternary structure, heterotetramer of two alpha and two beta chains.

The protein resides in the cytoplasm. It carries out the reaction N(2)-acetyl-L-ornithine + L-glutamate = N-acetyl-L-glutamate + L-ornithine. The enzyme catalyses L-glutamate + acetyl-CoA = N-acetyl-L-glutamate + CoA + H(+). Its pathway is amino-acid biosynthesis; L-arginine biosynthesis; L-ornithine and N-acetyl-L-glutamate from L-glutamate and N(2)-acetyl-L-ornithine (cyclic): step 1/1. It participates in amino-acid biosynthesis; L-arginine biosynthesis; N(2)-acetyl-L-ornithine from L-glutamate: step 1/4. In terms of biological role, catalyzes two activities which are involved in the cyclic version of arginine biosynthesis: the synthesis of N-acetylglutamate from glutamate and acetyl-CoA as the acetyl donor, and of ornithine by transacetylation between N(2)-acetylornithine and glutamate. This chain is Arginine biosynthesis bifunctional protein ArgJ, found in Bartonella quintana (strain Toulouse) (Rochalimaea quintana).